The primary structure comprises 367 residues: Aurora kinase (367 aa).

Residues 30 to 49 form a disordered region; sequence TTATNGAPPQARVQPGKGYR. Residues 109–360 enclose the Protein kinase domain; it reads FEIGKVLGKG…LKEVKKHPWI (252 aa). ATP-binding positions include 115–123 and K138; that span reads LGKGKFGRV. D232 functions as the Proton acceptor in the catalytic mechanism.

The protein belongs to the protein kinase superfamily. Ser/Thr protein kinase family. Aurora subfamily.

It localises to the nucleus. It is found in the cytoplasm. The protein resides in the cytoskeleton. The protein localises to the spindle. Its subcellular location is the chromosome. It localises to the centromere. It is found in the kinetochore. It catalyses the reaction L-seryl-[protein] + ATP = O-phospho-L-seryl-[protein] + ADP + H(+). The catalysed reaction is L-threonyl-[protein] + ATP = O-phospho-L-threonyl-[protein] + ADP + H(+). In terms of biological role, component of the chromosomal passenger complex (CPC), a complex that acts as a key regulator of chromosome segregation and cytokinesis. Has a role in error-correction of aberrent kinetochore-microtubule attachments to ensure that sister kinetochores become bioriented and connect to opposite poles by promoting spindle assembly checkpoint signaling. The polypeptide is Aurora kinase (IPL1) (Eremothecium gossypii (strain ATCC 10895 / CBS 109.51 / FGSC 9923 / NRRL Y-1056) (Yeast)).